Reading from the N-terminus, the 309-residue chain is tRNA pseudouridine synthase B (309 aa).

The Nucleophile role is filled by Asp-51.

Belongs to the pseudouridine synthase TruB family. Type 1 subfamily.

It carries out the reaction uridine(55) in tRNA = pseudouridine(55) in tRNA. Responsible for synthesis of pseudouridine from uracil-55 in the psi GC loop of transfer RNAs. This chain is tRNA pseudouridine synthase B, found in Coxiella burnetii (strain RSA 331 / Henzerling II).